Here is a 617-residue protein sequence, read N- to C-terminus: Proline--tRNA ligase (617 aa).

This sequence belongs to the class-II aminoacyl-tRNA synthetase family. ProS type 1 subfamily. In terms of assembly, homodimer.

The protein resides in the cytoplasm. It catalyses the reaction tRNA(Pro) + L-proline + ATP = L-prolyl-tRNA(Pro) + AMP + diphosphate. Catalyzes the attachment of proline to tRNA(Pro) in a two-step reaction: proline is first activated by ATP to form Pro-AMP and then transferred to the acceptor end of tRNA(Pro). As ProRS can inadvertently accommodate and process non-cognate amino acids such as alanine and cysteine, to avoid such errors it has two additional distinct editing activities against alanine. One activity is designated as 'pretransfer' editing and involves the tRNA(Pro)-independent hydrolysis of activated Ala-AMP. The other activity is designated 'posttransfer' editing and involves deacylation of mischarged Ala-tRNA(Pro). The misacylated Cys-tRNA(Pro) is not edited by ProRS. This Streptococcus pneumoniae (strain ATCC 700669 / Spain 23F-1) protein is Proline--tRNA ligase.